Here is a 275-residue protein sequence, read N- to C-terminus: Ribosomal RNA small subunit methyltransferase A (275 aa).

Asn-21, Leu-23, Gly-48, Glu-69, Asp-94, and Asn-115 together coordinate S-adenosyl-L-methionine.

Belongs to the class I-like SAM-binding methyltransferase superfamily. rRNA adenine N(6)-methyltransferase family. RsmA subfamily.

Its subcellular location is the cytoplasm. It carries out the reaction adenosine(1518)/adenosine(1519) in 16S rRNA + 4 S-adenosyl-L-methionine = N(6)-dimethyladenosine(1518)/N(6)-dimethyladenosine(1519) in 16S rRNA + 4 S-adenosyl-L-homocysteine + 4 H(+). Specifically dimethylates two adjacent adenosines (A1518 and A1519) in the loop of a conserved hairpin near the 3'-end of 16S rRNA in the 30S particle. May play a critical role in biogenesis of 30S subunits. This chain is Ribosomal RNA small subunit methyltransferase A, found in Clostridium botulinum (strain Loch Maree / Type A3).